We begin with the raw amino-acid sequence, 367 residues long: Cyclin-dependent kinase 5 activator 2 (367 aa).

Over residues 1-11 (MGTVLSLSPAS) the composition is skewed to polar residues. 4 disordered regions span residues 1 to 56 (MGTV…RLKR), 72 to 98 (ASAKKKKGSKKVTPKPASTGPDPLVQQ), 131 to 175 (AAAT…GSPR), and 329 to 367 (GEAAASGGGPPSGGAPAASSAARDSCAAGTKHWTMNLDR). The N-myristoyl glycine moiety is linked to residue glycine 2. The segment covering 74–84 (AKKKKGSKKVT) has biased composition (basic residues). Threonine 84 carries the phosphothreonine modification. The span at 131–148 (AAATCEPPSGGSAAAQPP) shows a compositional bias: low complexity. A compositionally biased stretch (pro residues) spans 154 to 171 (KPPPPPPPAPQVAPPVPG). Residues 342–357 (GAPAASSAARDSCAAG) are compositionally biased toward low complexity.

It belongs to the cyclin-dependent kinase 5 activator family. In terms of assembly, heterodimer of a catalytic subunit and a regulatory subunit. In terms of processing, myristoylated. The Gly-2-Ala mutant is absent of the cell periphery, suggesting that a proper myristoylation signal is essential for the proper distribution of CDK5R2 (p39). As to expression, brain and neuron specific.

It localises to the cell membrane. Functionally, activator of CDK5/TPKII. The protein is Cyclin-dependent kinase 5 activator 2 (CDK5R2) of Homo sapiens (Human).